Reading from the N-terminus, the 31-residue chain is Dermaseptin-7.2TR (31 aa).

Glutamate 31 carries the glutamic acid 1-amide modification.

In terms of tissue distribution, expressed by the skin glands.

The protein resides in the secreted. Has antimicrobial activity. The protein is Dermaseptin-7.2TR of Phyllomedusa trinitatis (Trinidad leaf frog).